A 258-amino-acid chain; its full sequence is UPF0758 protein Bcep1808_2579 (258 aa).

One can recognise an MPN domain in the interval 136–258 (PIDSPGAVED…TFSFARAGWL (123 aa)). Zn(2+) is bound by residues H207, H209, and D220. Positions 207–220 (HNHPSGAVQPSAED) match the JAMM motif motif.

Belongs to the UPF0758 family.

This chain is UPF0758 protein Bcep1808_2579, found in Burkholderia vietnamiensis (strain G4 / LMG 22486) (Burkholderia cepacia (strain R1808)).